Here is a 361-residue protein sequence, read N- to C-terminus: Serine/threonine-protein kinase SAPK9 (361 aa).

Residues 22–278 (YELVKEIGSG…MPEIKNHPWF (257 aa)) form the Protein kinase domain. ATP is bound by residues 28–36 (IGSGNFGVA) and Lys51. Catalysis depends on Asp141, which acts as the Proton acceptor.

The protein belongs to the protein kinase superfamily. Ser/Thr protein kinase family. In terms of assembly, interacts with BZIP46. Post-translationally, may be phosphorylated. As to expression, expressed in leaf sheaths and roots. Expressed in shoots of young seedlings.

The protein resides in the cytoplasm. It is found in the nucleus. The catalysed reaction is L-seryl-[protein] + ATP = O-phospho-L-seryl-[protein] + ADP + H(+). It catalyses the reaction L-threonyl-[protein] + ATP = O-phospho-L-threonyl-[protein] + ADP + H(+). Its activity is regulated as follows. Activated by hyperosmotic stress and abscisic acid (ABA). May play a role in signal transduction of hyperosmotic response. Can phosphorylate BZIP46 in vitro. The sequence is that of Serine/threonine-protein kinase SAPK9 (SAPK9) from Oryza sativa subsp. japonica (Rice).